The primary structure comprises 453 residues: Pup--protein ligase (453 aa).

Position 9 (Glu-9) interacts with Mg(2+). Arg-53 lines the ATP pocket. Tyr-55 contributes to the Mg(2+) binding site. Catalysis depends on Asp-57, which acts as the Proton acceptor. Glu-63 serves as a coordination point for Mg(2+). ATP contacts are provided by Thr-66 and Trp-420.

Belongs to the Pup ligase/Pup deamidase family. Pup-conjugating enzyme subfamily.

The catalysed reaction is ATP + [prokaryotic ubiquitin-like protein]-L-glutamate + [protein]-L-lysine = ADP + phosphate + N(6)-([prokaryotic ubiquitin-like protein]-gamma-L-glutamyl)-[protein]-L-lysine.. Its pathway is protein degradation; proteasomal Pup-dependent pathway. It participates in protein modification; protein pupylation. Catalyzes the covalent attachment of the prokaryotic ubiquitin-like protein modifier Pup to the proteasomal substrate proteins, thereby targeting them for proteasomal degradation. This tagging system is termed pupylation. The ligation reaction involves the side-chain carboxylate of the C-terminal glutamate of Pup and the side-chain amino group of a substrate lysine. The protein is Pup--protein ligase of Nocardioides sp. (strain ATCC BAA-499 / JS614).